A 203-amino-acid polypeptide reads, in one-letter code: Urease accessory protein UreG (203 aa).

11–18 (GPVGSGKT) contacts GTP.

It belongs to the SIMIBI class G3E GTPase family. UreG subfamily. In terms of assembly, homodimer. UreD, UreF and UreG form a complex that acts as a GTP-hydrolysis-dependent molecular chaperone, activating the urease apoprotein by helping to assemble the nickel containing metallocenter of UreC. The UreE protein probably delivers the nickel.

It is found in the cytoplasm. Its function is as follows. Facilitates the functional incorporation of the urease nickel metallocenter. This process requires GTP hydrolysis, probably effectuated by UreG. In Prochlorococcus marinus (strain MIT 9312), this protein is Urease accessory protein UreG.